A 336-amino-acid chain; its full sequence is Cytochrome P450 monooxygenase lcsN (336 aa).

Residue Cys271 participates in heme binding.

This sequence belongs to the cytochrome P450 family. Heme serves as cofactor.

Its pathway is secondary metabolite biosynthesis. In terms of biological role, cytochrome P450 monooxygenase; part of the gene cluster that mediates the biosynthesis of the lipopeptide antibiotics leucinostatins that show extensive biological activities, including antimalarial, antiviral, antibacterial, antifungal, and antitumor activities, as well as phytotoxic. Leucinostatin A contains nine amino acid residues, including the unusual amino acid 4-methyl-L-proline (MePro), 2-amino-6-hydroxy-4-methyl-8-oxodecanoic acid (AHyMeOA), 3-hydroxyleucine (HyLeu), alpha-aminoisobutyric acid (AIB), beta-Ala, a 4-methylhex-2-enoic acid at the N-terminus as well as a N1,N1-dimethylpropane-1,2-diamine (DPD) at the C-terminus. The biosynthesis of leucinostatins is probably initiated with the assembly of 4-methylhex-2-enoic acid by a reducing PKS. Two reducing polyketide synthases, lcsB and lcsC, have been identified in the cluster and it is not clear which is the one that assembles 4-methylhex-2-enoic acid since both contain KS, AT, DH, cMT, ER, KR and ACP domains. The polyketide residue might be transferred to the NRPS lcsA, mediated by two additional enzymes, the acyl-CoA ligase lcsD and the thioesterase lcsE. The linear polyketide carboxylic acid, which is released from PKS, is converted to a CoA thioester by lcsD, and then lcsE hydrolyzes the thiol bond and shuttles the polyketide intermediate to lcsA. The C domain of the first module catalyzed the condensation of 4-methylhex-2-enoic acid and MePro carried by domain A1, followed by successive condensations of nine amino acids to trigger the elongation of the linear peptide. A5 and A6 domains of lcsA are proposed to incorporate leucine, A2 AHyMeOA, and A3 incorporates HyLeu. A4, A7 and A8 incorporate AIB. The AHyMeOA in leucinostatin A activated by the A2 might be produced by the second PKS (lcsB or lcsC) present within the cluster. The MePro is probably produced via leucine cyclization and may originate from a separate pathway, independent of the cluster. Another nonproteinogenic amino acid, beta-Ala, could be produced by an aspartic acid decarboxylase also localized outside of the cluster. Two candidates are VFPBJ_01400 and VFPBJ_10476. The final peptide scaffold may be released by the NAD(P)H-dependent thioester reductase (TE) at the C-terminal region of lcsA. Transamination of the lcsA product by the transaminase lcsP may produce DPD at the C-terminus. Further hydroxylation steps performed alternatively by the cytochrome P450 monooxygenases lcsI, lcsK and lcsN then yield the non-methylated leucinostatins precursor. It is also possible that leucines can be hydroxylated prior to their incorporation into the peptide. Varying extents of methylation then lead to the formation of leucinostatins A and B. The chain is Cytochrome P450 monooxygenase lcsN from Purpureocillium lilacinum (Paecilomyces lilacinus).